The primary structure comprises 180 residues: MTLKELLVGFGTQVRSIWMIGLHAFAKRETRMYPEEPIYLPPRYRGRIVLTRDPDGEERCVACNLCAVACPVGCISLQKAETKDGRWYPEFFRINFSRCIFCGLCEEACPTTAIQLTPDFEMGEYKRQDLVYEKEDLLISGPGKYPEYNFYRMAGMAIDGKDKGEAENEAKPIDVKSLLP.

4Fe-4S ferredoxin-type domains lie at 50 to 80 and 90 to 119; these read LTRDPDGEERCVACNLCAVACPVGCISLQKA and EFFRINFSRCIFCGLCEEACPTTAIQLTPD. [4Fe-4S] cluster is bound by residues cysteine 60, cysteine 63, cysteine 66, cysteine 70, cysteine 99, cysteine 102, cysteine 105, and cysteine 109.

The protein belongs to the complex I 23 kDa subunit family. As to quaternary structure, NDH-1 is composed of 13 different subunits. Subunits NuoA, H, J, K, L, M, N constitute the membrane sector of the complex. The cofactor is [4Fe-4S] cluster.

The protein localises to the cell inner membrane. The enzyme catalyses a quinone + NADH + 5 H(+)(in) = a quinol + NAD(+) + 4 H(+)(out). NDH-1 shuttles electrons from NADH, via FMN and iron-sulfur (Fe-S) centers, to quinones in the respiratory chain. The immediate electron acceptor for the enzyme in this species is believed to be ubiquinone. Couples the redox reaction to proton translocation (for every two electrons transferred, four hydrogen ions are translocated across the cytoplasmic membrane), and thus conserves the redox energy in a proton gradient. The polypeptide is NADH-quinone oxidoreductase subunit I (Shigella sonnei (strain Ss046)).